The chain runs to 131 residues: MAAARKSNTRKRRVKKNIESGIAHIRSTFNNTIVTITDTHGNAISWSSAGALGFRGSRKSTPFAAQMAAETAAKGSIEHGLKTLEVTVKGPGSGREAAIRALQAAGLEVTAIRDVTPVPHNGCRPPKRRRV.

Belongs to the universal ribosomal protein uS11 family. In terms of assembly, part of the 30S ribosomal subunit. Interacts with proteins S7 and S18. Binds to IF-3. Interacts with VmlR. Interacts with BrxC.

Located on the platform of the 30S subunit, it bridges several disparate RNA helices of the 16S rRNA. Forms part of the Shine-Dalgarno cleft in the 70S ribosome. This is Small ribosomal subunit protein uS11 from Bacillus subtilis (strain 168).